The chain runs to 219 residues: Uracil phosphoribosyltransferase 1 (219 aa).

Residues Arg-33, Arg-42, and 76–79 (DGRI) contribute to the GTP site. 5-phospho-alpha-D-ribose 1-diphosphate is bound at residue Arg-86. Arg-103 lines the GTP pocket. Residue Arg-111 participates in 5-phospho-alpha-D-ribose 1-diphosphate binding. Residue Arg-132 coordinates GTP. 5-phospho-alpha-D-ribose 1-diphosphate is bound by residues Asp-138 and 138–146 (DPMLATGGS). A D-ribose 5-phosphate-binding site is contributed by Tyr-202. Uracil-binding positions include Ile-203 and 208–210 (GDF). Asp-209 contributes to the 5-phospho-alpha-D-ribose 1-diphosphate binding site.

Belongs to the UPRTase family. It depends on Mg(2+) as a cofactor.

The enzyme catalyses UMP + diphosphate = 5-phospho-alpha-D-ribose 1-diphosphate + uracil. It participates in pyrimidine metabolism; UMP biosynthesis via salvage pathway; UMP from uracil: step 1/1. Allosterically activated by GTP. In terms of biological role, catalyzes the conversion of uracil and 5-phospho-alpha-D-ribose 1-diphosphate (PRPP) to UMP and diphosphate. This chain is Uracil phosphoribosyltransferase 1, found in Schizosaccharomyces pombe (strain 972 / ATCC 24843) (Fission yeast).